A 320-amino-acid chain; its full sequence is Malate dehydrogenase (320 aa).

Residues glycine 10–glycine 15 and aspartate 34 contribute to the NAD(+) site. Residues arginine 83 and arginine 89 each contribute to the substrate site. NAD(+)-binding positions include asparagine 96 and isoleucine 119–asparagine 121. 2 residues coordinate substrate: asparagine 121 and arginine 152. Histidine 176 serves as the catalytic Proton acceptor.

Belongs to the LDH/MDH superfamily. MDH type 3 family.

It catalyses the reaction (S)-malate + NAD(+) = oxaloacetate + NADH + H(+). In terms of biological role, catalyzes the reversible oxidation of malate to oxaloacetate. The sequence is that of Malate dehydrogenase from Rhizorhabdus wittichii (strain DSM 6014 / CCUG 31198 / JCM 15750 / NBRC 105917 / EY 4224 / RW1) (Sphingomonas wittichii).